The chain runs to 98 residues: MMCGAPSATQPATAETQHIADQVRSQLEEKENKKFPVFKAVSFKSQVVAGTNYFIKVHVGDEDFVHLRVFQSLPHENKPLTLSNYQTNKAKHDELTYF.

Position 1 is an N-acetylmethionine (methionine 1). The Secondary area of contact signature appears at 46 to 50 (QVVAG).

The protein belongs to the cystatin family. As to quaternary structure, able to form dimers stabilized by noncovalent forces.

The protein localises to the cytoplasm. The protein resides in the nucleus. Its function is as follows. This is an intracellular thiol proteinase inhibitor. Tightly binding reversible inhibitor of cathepsins L, H and B. The protein is Cystatin-B (CSTB) of Pongo pygmaeus (Bornean orangutan).